Here is a 4065-residue protein sequence, read N- to C-terminus: Polyketide synthase-nonribosomal peptide synthetase pyiS (4065 aa).

Positions 6-440 (SEPVAIIGTG…GANCHAILEA (435 aa)) constitute a Ketosynthase family 3 (KS3) domain. Residues Cys-179, His-314, and His-360 each act as for beta-ketoacyl synthase activity in the active site. The interval 552–875 (IFTGQGAQWP…PYTGVLSRGK (324 aa)) is acyl transferase. The tract at residues 950 to 1087 (NELLGRQILD…CDVLVTYGDS (138 aa)) is N-terminal hotdog fold. One can recognise a PKS/mFAS DH domain in the interval 950 to 1260 (NELLGRQILD…TQPLFNPTEA (311 aa)). Positions 951–1254 (ELLGRQILDG…QVEGLQTQPL (304 aa)) are dehydratase (DH) domain. The active-site Proton acceptor; for dehydratase activity is the His-982. The C-terminal hotdog fold stretch occupies residues 1102-1260 (EYFMLGVESD…TQPLFNPTEA (159 aa)). Catalysis depends on Asp-1166, which acts as the Proton donor; for dehydratase activity. Residues 1409 to 1593 (AHGMPRYTKY…KQTGFSGIDT (185 aa)) form a methyltransferase (MT) domain region. The segment at 2129 to 2302 (TYWLVGLSGT…NASVVHIGAI (174 aa)) is ketoreductase (KR)domain. The Carrier 1 domain maps to 2411–2492 (INSAEVYEII…EILETAQQLL (82 aa)). Ser-2452 is modified (O-(pantetheine 4'-phosphoryl)serine). The disordered stretch occupies residues 2497 to 2561 (LPKMDPNDKS…GAKKGETVSK (65 aa)). The segment covering 2551–2561 (SGAKKGETVSK) has biased composition (basic and acidic residues). A condensation region spans residues 2645–3076 (SKKTPISFAQ…FSRNQALRLA (432 aa)). Residues 3112–3516 (DIAKQKSHSL…RLLLEGRIAD (405 aa)) form an adenylation region. In terms of domain architecture, Carrier 2 spans 3634-3714 (QDLNDTESRL…DMAALVDELS (81 aa)). Ser-3674 carries the O-(pantetheine 4'-phosphoryl)serine modification. The reductase-like stretch occupies residues 3760 to 3975 (LTGSTGFLGR…LDFISVDEAA (216 aa)).

Belongs to the NRP synthetase family.

It participates in mycotoxin biosynthesis. Its function is as follows. Hybrid PKS-NRPS synthetase; part of the gene cluster that mediates the biosynthesis of the mycotoxin pyrichalasin H, a tyrosine-derived cytochalasan that inhibits the growth of rice seedlings, but also inhibits lymphocyte capping and actin polymerization and alters cell morphology. Pyrichalasin H is indicated as the responsible agent for the genus-specific pathogenicity of M.grisea toward crabgrass. The first step in the pathway is catalyzed by the O-methyltransferase pyiA which methylates free tyrosine to generate the precursor O-methyltyrosine. The hybrid PKS-NRPS pyiS, assisted by the enoyl reductase pyiC, are responsible for fusion of the O-methyltyrosine precursor and the polyketide backbone. The polyketide synthase module (PKS) of pyiS is responsible for the synthesis of the polyketide backbone and the downstream nonribosomal peptide synthetase (NRPS) amidates the carboxyl end of the polyketide with the O-methyltyrosine precursor. As the NRPS A-domain demonstrates substrate tolerance, pyiS can also use phenylalanine, tyrosine and even para-chlorophenylalanine as amino acid precursor, which leads to the production of novel cytochalasans, including halogenated cytochalasans. Because pyiS lacks a designated enoylreductase (ER) domain, the required activity is provided the enoyl reductase pyiC. Reduction by the hydrolyase pyiE leads to 1,5-dihydropyrrolone, which is substrate for dehydration and intra-molecular Diels-Alder cyclization by the Diels-Alderase pyiF to yield the required isoindolone-fused macrocycle. The tailoring cytochrome P450 monooxygenases piyD and piyG catalyze the hydroxylation at C-18 and C-7, respectivily, whereas the short-chain dehydrogenase/reductase pyiH reduces the carbonyl at C-21 in preparation for the transfer of an acetyl group by the acetyltransferase pyiB. These 3 reactions whose order is not clear yet, lead to the production of O-methylpyrichalasin J, a deacetylated pyrichalasin H. Finally, pyiB to converts O-methylpyrichalasin J into the final product pyrichalasin H via acetylation of C-21. This Pyricularia grisea (Crabgrass-specific blast fungus) protein is Polyketide synthase-nonribosomal peptide synthetase pyiS.